We begin with the raw amino-acid sequence, 800 residues long: Nucleolar complex protein 3 homolog (800 aa).

The segment at 37–90 (STIKKYRKEQRKLRQAVKDAVSKKPFPLEDPKSKRPVKGMEREEEDEEDQALPL) is disordered. The segment covering 40 to 51 (KKYRKEQRKLRQ) has biased composition (basic residues). The segment covering 52-77 (AVKDAVSKKPFPLEDPKSKRPVKGME) has biased composition (basic and acidic residues). Residues 78 to 90 (REEEDEEDQALPL) are compositionally biased toward acidic residues. A Glycyl lysine isopeptide (Lys-Gly) (interchain with G-Cter in SUMO2) cross-link involves residue Lys-333. The stretch at 450–489 (FKEKRKTLSRMQRKWKKAEEKLERELREAEASESTERKLK) forms a coiled coil.

Belongs to the CBF/MAK21 family.

The protein localises to the nucleus. The protein resides in the nucleolus. In Cricetulus griseus (Chinese hamster), this protein is Nucleolar complex protein 3 homolog (NOC3L).